The chain runs to 691 residues: Choline transporter-like 1 (691 aa).

Over residues 1-10 the composition is skewed to basic and acidic residues; it reads MGCAESKDGE. A disordered region spans residues 1–20; sequence MGCAESKDGEGEAQNNRPKY. The next 3 membrane-spanning stretches (helical) occupy residues 28 to 48, 205 to 225, and 232 to 252; these read WLAI…FSFV, WHII…LVTM, and IVSW…TVAL. Asn261 is a glycosylation site (N-linked (GlcNAc...) asparagine). A run of 2 helical transmembrane segments spans residues 282-302 and 332-352; these read VLTL…VIYF and LLAF…IICL. The N-linked (GlcNAc...) asparagine glycan is linked to Asn385. The next 4 membrane-spanning stretches (helical) occupy residues 408–428, 527–547, 562–582, and 591–611; these read SMFW…FACQ, VVAI…NAMA, FILF…GIVL, and FYMA…HIIL.

It belongs to the CTL (choline transporter-like) family.

The protein localises to the membrane. The chain is Choline transporter-like 1 from Drosophila melanogaster (Fruit fly).